Consider the following 332-residue polypeptide: Holliday junction branch migration complex subunit RuvB (332 aa).

Residues 1–181 (MSRILDNEMM…FGITGHMEYY (181 aa)) are large ATPase domain (RuvB-L). ATP is bound by residues L20, R21, G62, K65, T66, T67, 128–130 (EDF), R171, Y181, and R218. Residue T66 participates in Mg(2+) binding. The tract at residues 182–252 (AHADLTEIVE…ITDKALTMLD (71 aa)) is small ATPAse domain (RuvB-S). Residues 255 to 332 (HEGLDYVDQK…EHLGYEYSEK (78 aa)) are head domain (RuvB-H). Residues R291, R310, R312, and R315 each coordinate DNA.

The protein belongs to the RuvB family. Homohexamer. Forms an RuvA(8)-RuvB(12)-Holliday junction (HJ) complex. HJ DNA is sandwiched between 2 RuvA tetramers; dsDNA enters through RuvA and exits via RuvB. An RuvB hexamer assembles on each DNA strand where it exits the tetramer. Each RuvB hexamer is contacted by two RuvA subunits (via domain III) on 2 adjacent RuvB subunits; this complex drives branch migration. In the full resolvosome a probable DNA-RuvA(4)-RuvB(12)-RuvC(2) complex forms which resolves the HJ.

It is found in the cytoplasm. It catalyses the reaction ATP + H2O = ADP + phosphate + H(+). In terms of biological role, the RuvA-RuvB-RuvC complex processes Holliday junction (HJ) DNA during genetic recombination and DNA repair, while the RuvA-RuvB complex plays an important role in the rescue of blocked DNA replication forks via replication fork reversal (RFR). RuvA specifically binds to HJ cruciform DNA, conferring on it an open structure. The RuvB hexamer acts as an ATP-dependent pump, pulling dsDNA into and through the RuvAB complex. RuvB forms 2 homohexamers on either side of HJ DNA bound by 1 or 2 RuvA tetramers; 4 subunits per hexamer contact DNA at a time. Coordinated motions by a converter formed by DNA-disengaged RuvB subunits stimulates ATP hydrolysis and nucleotide exchange. Immobilization of the converter enables RuvB to convert the ATP-contained energy into a lever motion, pulling 2 nucleotides of DNA out of the RuvA tetramer per ATP hydrolyzed, thus driving DNA branch migration. The RuvB motors rotate together with the DNA substrate, which together with the progressing nucleotide cycle form the mechanistic basis for DNA recombination by continuous HJ branch migration. Branch migration allows RuvC to scan DNA until it finds its consensus sequence, where it cleaves and resolves cruciform DNA. This is Holliday junction branch migration complex subunit RuvB from Streptococcus pneumoniae serotype 19F (strain G54).